Reading from the N-terminus, the 836-residue chain is Protein O-mannosyl-transferase TMTC2 (836 aa).

A helical transmembrane segment spans residues methionine 1–alanine 21. Residues aspartate 22–proline 84 are Extracellular-facing. A helical membrane pass occupies residues tryptophan 85–phenylalanine 105. Residues serine 106–lysine 107 lie on the Cytoplasmic side of the membrane. The chain crosses the membrane as a helical span at residues isoleucine 108–isoleucine 128. Over histidine 129–alanine 132 the chain is Extracellular. The helical transmembrane segment at valine 133–leucine 153 threads the bilayer. Residues cysteine 154–arginine 162 lie on the Cytoplasmic side of the membrane. A run of 2 helical transmembrane segments spans residues glycine 163–leucine 184 and tryptophan 185–phenylalanine 204. The Cytoplasmic segment spans residues histidine 205 to lysine 220. The chain crosses the membrane as a helical span at residues asparagine 221 to alanine 241. The Extracellular segment spans residues arginine 242–histidine 312. The helical transmembrane segment at threonine 313–valine 333 threads the bilayer. Residues aspartate 334–serine 399 lie on the Cytoplasmic side of the membrane. The helical transmembrane segment at leucine 400–alanine 420 threads the bilayer. Over glutamate 421 to arginine 422 the chain is Extracellular. A helical transmembrane segment spans residues valine 423–tyrosine 443. The Cytoplasmic segment spans residues valine 444 to arginine 449. The helical transmembrane segment at phenylalanine 450–threonine 470 threads the bilayer. Topologically, residues alanine 471–threonine 836 are extracellular. 9 TPR repeats span residues alanine 493–methionine 526, alanine 527–leucine 560, alanine 561–asparagine 594, threonine 606–glutamine 639, glutamine 643–histidine 676, isoleucine 677–lysine 710, glycine 711–glutamate 744, phenylalanine 745–tyrosine 778, and proline 779–aspartate 812.

The protein belongs to the TMTC family.

It localises to the membrane. Its subcellular location is the endoplasmic reticulum. The enzyme catalyses a di-trans,poly-cis-dolichyl beta-D-mannosyl phosphate + L-seryl-[protein] = 3-O-(alpha-D-mannosyl)-L-seryl-[protein] + a di-trans,poly-cis-dolichyl phosphate + H(+). It carries out the reaction a di-trans,poly-cis-dolichyl beta-D-mannosyl phosphate + L-threonyl-[protein] = 3-O-(alpha-D-mannosyl)-L-threonyl-[protein] + a di-trans,poly-cis-dolichyl phosphate + H(+). Its pathway is protein modification; protein glycosylation. In terms of biological role, transfers mannosyl residues to the hydroxyl group of serine or threonine residues. The 4 members of the TMTC family are O-mannosyl-transferases dedicated primarily to the cadherin superfamily, each member seems to have a distinct role in decorating the cadherin domains with O-linked mannose glycans at specific regions. Also acts as O-mannosyl-transferase on other proteins such as PDIA3. This Homo sapiens (Human) protein is Protein O-mannosyl-transferase TMTC2.